Consider the following 285-residue polypeptide: Iodotyrosine deiodinase 1 (285 aa).

A helical membrane pass occupies residues 1–21 (MFLLTPVLVAVVCILVIWVFK). Residues 96–100 (RRSIR) and 124–125 (SG) contribute to the FMN site. 3,5-diiodo-L-tyrosine is bound by residues A126, E153, Y157, and K178. 4 residues coordinate 3-iodo-L-tyrosine: A126, E153, Y157, and K178. FMN contacts are provided by residues 233 to 235 (TTT) and R275.

It belongs to the nitroreductase family. As to quaternary structure, homodimer. It depends on FMN as a cofactor.

It localises to the cell membrane. It is found in the cytoplasmic vesicle membrane. It catalyses the reaction 2 iodide + L-tyrosine + 2 NADP(+) = 3,5-diiodo-L-tyrosine + 2 NADPH + H(+). The enzyme catalyses iodide + L-tyrosine + NADP(+) = 3-iodo-L-tyrosine + NADPH. The catalysed reaction is 3-iodo-L-tyrosine + iodide + NADP(+) = 3,5-diiodo-L-tyrosine + NADPH + H(+). It carries out the reaction L-tyrosine + chloride + NADP(+) = 3-chloro-L-tyrosine + NADPH. It catalyses the reaction bromide + L-tyrosine + NADP(+) = 3-bromo-L-tyrosine + NADPH. Catalyzes the dehalogenation of halotyrosines such as 3-bromo-L-tyrosine, 3-chloro-L-tyrosine, 3-iodo-L-tyrosine and 3,5-diiodo-L-tyrosine. During thyroid hormone biosynthesis, facilitates iodide salvage by catalysing the oxidative NADPH-dependent deiodination of the halogenated by-products of thyroid hormone production, monoiodotyrosine (L-MIT) and diiodotyrosine (L-DIT). The scavanged iodide can then reenter the hormone-producing pathways. Acts more efficiently on 3-iodo-L-tyrosine than 3,5-diiodo-L-tyrosine. The chain is Iodotyrosine deiodinase 1 (Iyd) from Rattus norvegicus (Rat).